A 249-amino-acid polypeptide reads, in one-letter code: 5'-nucleotidase SurE (249 aa).

Residues D8, D9, S39, and N96 each contribute to the a divalent metal cation site.

This sequence belongs to the SurE nucleotidase family. A divalent metal cation serves as cofactor.

It is found in the cytoplasm. The catalysed reaction is a ribonucleoside 5'-phosphate + H2O = a ribonucleoside + phosphate. Its function is as follows. Nucleotidase that shows phosphatase activity on nucleoside 5'-monophosphates. The sequence is that of 5'-nucleotidase SurE from Clostridium tetani (strain Massachusetts / E88).